Consider the following 96-residue polypeptide: Conantokin Rl-C (96 aa).

The N-terminal stretch at 1–21 (MQLYTYLYLLVPLVTFHLILG) is a signal peptide. A propeptide spanning residues 22 to 78 (TGTLDHGDALTERRSADATALKPEPVLLQKSSARSTDDNGKDTQMKRIFKKRRNKAR) is cleaved from the precursor. Residues 36–85 (SADATALKPEPVLLQKSSARSTDDNGKDTQMKRIFKKRRNKARGEEELSE) are disordered. Basic and acidic residues predominate over residues 56–66 (STDDNGKDTQM). An a divalent metal cation-binding site is contributed by Glu81. Glu81, Glu82, Glu85, Glu89, and Glu93 each carry 4-carboxyglutamate. Glu85, Glu89, and Glu93 together coordinate a divalent metal cation. At Asn96 the chain carries Asparagine amide.

Belongs to the conotoxin B superfamily. Requires Ca(2+) as cofactor. Mg(2+) is required as a cofactor. In terms of tissue distribution, expressed by the venom duct.

The protein resides in the secreted. Functionally, conantokins inhibit N-methyl-D-aspartate (NMDA) receptors. This toxin has antagonist activity on NR2B/GRIN2B (IC(50)=1.4 uM) and NR2A/GRIN2A (IC(50)=2.9 uM) subunits, when tested on rat receptors. This Conus rolani (Cone snail) protein is Conantokin Rl-C.